We begin with the raw amino-acid sequence, 471 residues long: Maintenance of mitochondrial morphology protein 1 (471 aa).

The Lumenal portion of the chain corresponds to 1–21; the sequence is MSSPQNTSCPPSQHSLSFTQG. A helical transmembrane segment spans residues 22–42; that stretch reads LLLGQLSVVLLIGAFIKFFIF. The Cytoplasmic portion of the chain corresponds to 43-471; sequence GESPSSSSRG…GSLPGAPAVA (429 aa). The 243-residue stretch at 128–370 folds into the SMP-LTD domain; sequence QPESLDWFNV…EPRVQLVALP (243 aa). Disordered stretches follow at residues 271-306, 395-415, and 448-471; these read GTTESSPHLPHPENQNESKPSRQDPEIPTNKDGVRS, EDPATKATHSGFTPVNANRDG, and RGDTQSVGEQLRIPGSLPGAPAVA. Basic and acidic residues predominate over residues 280–295; that stretch reads PHPENQNESKPSRQDP. Residues 401 to 410 show a composition bias toward polar residues; it reads ATHSGFTPVN.

The protein belongs to the MMM1 family. In terms of assembly, homodimer. Component of the ER-mitochondria encounter structure (ERMES) or MDM complex, composed of MMM1, MDM10, MDM12 and MDM34. An MMM1 homodimer associates with one molecule of MDM12 on each side in a pairwise head-to-tail manner, and the SMP-LTD domains of MMM1 and MDM12 generate a continuous hydrophobic tunnel for phospholipid trafficking.

The protein localises to the endoplasmic reticulum membrane. Functionally, component of the ERMES/MDM complex, which serves as a molecular tether to connect the endoplasmic reticulum (ER) and mitochondria. Components of this complex are involved in the control of mitochondrial shape and protein biogenesis, and function in nonvesicular lipid trafficking between the ER and mitochondria. The MDM12-MMM1 subcomplex functions in the major beta-barrel assembly pathway that is responsible for biogenesis of all outer membrane beta-barrel proteins, and acts in a late step after the SAM complex. The MDM10-MDM12-MMM1 subcomplex further acts in the TOM40-specific pathway after the action of the MDM12-MMM1 complex. Essential for establishing and maintaining the structure of mitochondria and maintenance of mtDNA nucleoids. The protein is Maintenance of mitochondrial morphology protein 1 of Arthroderma otae (strain ATCC MYA-4605 / CBS 113480) (Microsporum canis).